The chain runs to 489 residues: Netrin-5 (489 aa).

The N-terminal stretch at Met1 to Ala16 is a signal peptide. N-linked (GlcNAc...) asparagine glycosylation occurs at Asn62. Cystine bridges form between Cys157–Cys166, Cys159–Cys175, Cys177–Cys186, Cys189–Cys209, Cys212–Cys221, Cys214–Cys239, Cys242–Cys251, Cys254–Cys272, Cys275–Cys287, Cys277–Cys294, Cys296–Cys305, Cys308–Cys322, Cys345–Cys418, Cys349–Cys420, and Cys364–Cys475. Laminin EGF-like domains follow at residues Cys157–Pro211, Cys212–Ala274, and Cys275–Arg324. The 131-residue stretch at Cys345 to Cys475 folds into the NTR domain. Residues Glu470–His489 form a disordered region.

It is found in the secreted. Plays a role in neurogenesis. Prevents motor neuron cell body migration out of the neural tube. This chain is Netrin-5 (NTN5), found in Homo sapiens (Human).